The following is a 277-amino-acid chain: Carbonyl reductase [NADPH] 3 (277 aa).

Ser2 carries the N-acetylserine modification. Residues 10–34 (VTGA…GDVV), 38–42 (RDEAR), 63–64 (DI), and Asn90 contribute to the NADP(+) site. Ser30 is modified (phosphoserine). Position 140 (Ser140) interacts with substrate. Tyr194 functions as the Proton acceptor in the catalytic mechanism. An NADP(+)-binding site is contributed by 194–198 (YGVSK).

Belongs to the short-chain dehydrogenases/reductases (SDR) family.

The protein localises to the cytoplasm. The catalysed reaction is a secondary alcohol + NADP(+) = a ketone + NADPH + H(+). It catalyses the reaction a quinone + NADPH + H(+) = a quinol + NADP(+). Functionally, catalyzes the NADPH-dependent reduction of carbonyl compounds to their corresponding alcohols. Has low NADPH-dependent oxidoreductase activity. Acts on several orthoquinones, as well as on non-quinone compounds, such as isatin or on the anticancer drug oracin. Best substrates for CBR3 is 1,2- naphthoquinone, hence could play a role in protection against cytotoxicity of exogenous quinones. Exerts activity toward ortho-quinones but not paraquinones. No endogenous substrate for CBR3 except isatin has been identified. The sequence is that of Carbonyl reductase [NADPH] 3 from Rattus norvegicus (Rat).